The following is a 216-amino-acid chain: Peptide deformylase 1 (216 aa).

Residues Cys135 and His177 each coordinate Fe cation. Glu178 is an active-site residue. His181 provides a ligand contact to Fe cation.

This sequence belongs to the polypeptide deformylase family. Fe(2+) is required as a cofactor.

The enzyme catalyses N-terminal N-formyl-L-methionyl-[peptide] + H2O = N-terminal L-methionyl-[peptide] + formate. In terms of biological role, removes the formyl group from the N-terminal Met of newly synthesized proteins. Requires at least a dipeptide for an efficient rate of reaction. N-terminal L-methionine is a prerequisite for activity but the enzyme has broad specificity at other positions. This chain is Peptide deformylase 1, found in Streptomyces avermitilis (strain ATCC 31267 / DSM 46492 / JCM 5070 / NBRC 14893 / NCIMB 12804 / NRRL 8165 / MA-4680).